Here is a 105-residue protein sequence, read N- to C-terminus: MYKEPKNESEYEAELKNAPVAVVYLTATWCGPCRAIAPVFTNISNAPENSKITFFKVDVDALKKLPVCESLQGVPTFIAYRNGEEQERFSGANKVALENMVKKLL.

The Thioredoxin domain maps to 1 to 104; that stretch reads MYKEPKNESE…VALENMVKKL (104 aa). Residues C30 and C33 each act as nucleophile in the active site. Residues C30 and C33 are joined by a disulfide bond.

This sequence belongs to the thioredoxin family.

Its function is as follows. Participates in various redox reactions through the reversible oxidation of its active center dithiol to a disulfide and catalyzes dithiol-disulfide exchange reactions. The protein is Putative thioredoxin-5 (trxE) of Dictyostelium discoideum (Social amoeba).